A 470-amino-acid polypeptide reads, in one-letter code: Dendritic cell-specific transmembrane protein (470 aa).

The Cytoplasmic portion of the chain corresponds to Met1–Gly34. Residues Val35 to Leu55 traverse the membrane as a helical segment. Topologically, residues Pro56–Ser57 are extracellular. A helical transmembrane segment spans residues Ile58–Ala78. Residues Arg79 to Ala97 lie on the Cytoplasmic side of the membrane. Residues Leu98–Phe118 form a helical membrane-spanning segment. Over Lys119 to Ser209 the chain is Extracellular. The chain crosses the membrane as a helical span at residues Leu210 to Phe230. Over Met231–Asn292 the chain is Cytoplasmic. A helical transmembrane segment spans residues Leu293–Val313. At Asp314–Thr376 the chain is on the extracellular side. Residues Trp377–Leu397 form a helical membrane-spanning segment. Topologically, residues Met398 to Ser470 are cytoplasmic.

Monomer. Homodimer. Isoform 1 interacts (via the C-terminus cytoplasmic tail) with OS9 isoform 1 (via the C-terminus tail); the interaction induces DCSTAMP redistribution to the endoplasmic reticulum-Golgi intermediate compartment. Isoform 1 interacts (via the C-terminus cytoplasmic tail) with OS9 isoform 2 (via the C-terminus tail). Interacts with CREB3. Post-translationally, glycosylated. In terms of tissue distribution, preferentially expressed by dendritic cells (DCs). Detected in both immature and mature DCs. Highly expressed in lymph nodes, lung, kidney and liver. Expressed at lower levels in pancreas, bone marrow, spleen, leukocytes, in freshly isolated peripheral blood mononuclear cells (PBMC) and B-cells. Not expressed in freshly isolated monocytes.

Its subcellular location is the cell membrane. The protein localises to the endoplasmic reticulum membrane. It localises to the endoplasmic reticulum-Golgi intermediate compartment membrane. The protein resides in the endosome. In terms of biological role, probable cell surface receptor that plays several roles in cellular fusion, cell differentiation, bone and immune homeostasis. Plays a role in TNFSF11-mediated osteoclastogenesis. Cooperates with OCSTAMP in modulating cell-cell fusion in both osteoclasts and foreign body giant cells (FBGCs). Participates in osteoclast bone resorption. Involved in inducing the expression of tartrate-resistant acid phosphatase in osteoclast precursors. Plays a role in haematopoietic stem cell differentiation of bone marrow cells toward the myeloid lineage. Inhibits the development of neutrophilic granulocytes. Plays also a role in the regulation of dendritic cell (DC) antigen presentation activity by controlling phagocytic activity. Involved in the maintenance of immune self-tolerance and avoidance of autoimmune reactions. The protein is Dendritic cell-specific transmembrane protein (DCSTAMP) of Homo sapiens (Human).